A 197-amino-acid polypeptide reads, in one-letter code: Nucleoside triphosphate pyrophosphatase (197 aa).

Aspartate 71 functions as the Proton acceptor in the catalytic mechanism.

It belongs to the Maf family. A divalent metal cation serves as cofactor.

It localises to the cytoplasm. It catalyses the reaction a ribonucleoside 5'-triphosphate + H2O = a ribonucleoside 5'-phosphate + diphosphate + H(+). It carries out the reaction a 2'-deoxyribonucleoside 5'-triphosphate + H2O = a 2'-deoxyribonucleoside 5'-phosphate + diphosphate + H(+). Its function is as follows. Nucleoside triphosphate pyrophosphatase. May have a dual role in cell division arrest and in preventing the incorporation of modified nucleotides into cellular nucleic acids. The chain is Nucleoside triphosphate pyrophosphatase from Synechococcus sp. (strain JA-3-3Ab) (Cyanobacteria bacterium Yellowstone A-Prime).